A 342-amino-acid polypeptide reads, in one-letter code: S-adenosylmethionine:tRNA ribosyltransferase-isomerase (342 aa).

It belongs to the QueA family. In terms of assembly, monomer.

Its subcellular location is the cytoplasm. It catalyses the reaction 7-aminomethyl-7-carbaguanosine(34) in tRNA + S-adenosyl-L-methionine = epoxyqueuosine(34) in tRNA + adenine + L-methionine + 2 H(+). Its pathway is tRNA modification; tRNA-queuosine biosynthesis. In terms of biological role, transfers and isomerizes the ribose moiety from AdoMet to the 7-aminomethyl group of 7-deazaguanine (preQ1-tRNA) to give epoxyqueuosine (oQ-tRNA). In Listeria innocua serovar 6a (strain ATCC BAA-680 / CLIP 11262), this protein is S-adenosylmethionine:tRNA ribosyltransferase-isomerase.